Consider the following 1488-residue polypeptide: Phenolphthiocerol/phthiocerol polyketide synthase subunit E (1488 aa).

Residues 5–438 form the Ketosynthase family 3 (KS3) domain; it reads ENAIAVVGMA…GTNAHVVLEE (434 aa). Residues Cys-184, His-320, and His-361 each act as for beta-ketoacyl synthase activity in the active site. The tract at residues 551–868 is acyltransferase; the sequence is VFLFPGQGAQ…GELWSAGVEV (318 aa). The For malonyltransferase activity role is filled by Ser-641. A Carrier domain is found at 930–1004; sequence NGESQTEVTL…SLTAAVDASF (75 aa). Ser-965 carries the O-(pantetheine 4'-phosphoryl)serine modification. 1286 to 1331 provides a ligand contact to NADP(+); that stretch reads EGVVAVELEGEGRSVLRPDVDLRRTVGWFTTYYPVPLACATGLGAL.

It depends on NADP(+) as a cofactor. Pantetheine 4'-phosphate serves as cofactor.

It catalyses the reaction icosanoyl-[(phenol)carboxyphthiodiolenone synthase] + 2 (S)-methylmalonyl-CoA + 3 malonyl-CoA + 5 NADPH + 10 H(+) = C32-carboxyphthiodiolenone-[(phenol)carboxyphthiodiolenone synthase] + 5 CO2 + 5 NADP(+) + 5 CoA + 2 H2O. The enzyme catalyses docosanoyl-[(phenol)carboxyphthiodiolenone synthase] + 2 (S)-methylmalonyl-CoA + 3 malonyl-CoA + 5 NADPH + 10 H(+) = C34-carboxyphthiodiolenone-[(phenol)carboxyphthiodiolenone synthase] + 5 CO2 + 5 NADP(+) + 5 CoA + 2 H2O. It carries out the reaction 17-(4-hydroxyphenyl)heptadecanoyl-[(phenol)carboxyphthiodiolenone synthase] + 2 (S)-methylmalonyl-CoA + 3 malonyl-CoA + 5 NADPH + 10 H(+) = C35-(phenol)carboxyphthiodiolenone-[(phenol)carboxyphthiodiolenone synthase] + 5 CO2 + 5 NADP(+) + 5 CoA + 2 H2O. The catalysed reaction is 19-(4-hydroxyphenyl)nonadecanoyl-[(phenol)carboxyphthiodiolenone synthase] + 2 (S)-methylmalonyl-CoA + 3 malonyl-CoA + 5 NADPH + 10 H(+) = C37-(phenol)carboxyphthiodiolenone-[(phenol)carboxyphthiodiolenone synthase] + 5 CO2 + 5 NADP(+) + 5 CoA + 2 H2O. The protein operates within lipid metabolism; fatty acid biosynthesis. In terms of biological role, part of the PpsABCDE complex involved in the biosynthesis of the lipid core common to phthiocerols and phenolphthiocerols by successive additions of malonyl-CoA or methylmalonyl-CoA extender units. PpsA can accept as substrate the activated forms of either icosanoyl (C20), docosanoyl (C22) or lignoceroyl (C24) groups from FadD26, or a (4-hydroxyphenyl)-C17 or (4-hydroxyphenyl)-C19 fatty acyl from FadD29. PpsA initiates the biosynthesis and extends its substrate using a malonyl-CoA extender unit. The PpsB and PpsC proteins add the second and third malonyl-CoA extender units. PpsD adds an (R)-methylmalonyl unit and PpsE adds a second (R)-methylmalonyl unit. The incorporation of the methylmalonyl units results in formation of two branched methyl groups in the elongated product. This chain is Phenolphthiocerol/phthiocerol polyketide synthase subunit E (ppsE), found in Mycobacterium tuberculosis (strain CDC 1551 / Oshkosh).